The primary structure comprises 184 residues: UPF0301 protein RSKD131_2391 (184 aa).

The protein belongs to the UPF0301 (AlgH) family.

The protein is UPF0301 protein RSKD131_2391 of Cereibacter sphaeroides (strain KD131 / KCTC 12085) (Rhodobacter sphaeroides).